Consider the following 498-residue polypeptide: NAD(P)H-quinone oxidoreductase chain 4, chloroplastic (498 aa).

14 consecutive transmembrane segments (helical) span residues 4 to 24, 37 to 57, 87 to 107, 111 to 131, 134 to 154, 167 to 187, 207 to 227, 242 to 262, 274 to 294, 305 to 325, 331 to 351, 386 to 406, 417 to 437, and 461 to 481; these read LPWL…IPLL, LGIC…QFHL, MGLI…AWPV, VRLF…LFAS, ILLF…LLSM, FLLY…TMGL, IAVE…KLPI, HYST…YGLI, FLFS…ASLI, IAYS…SITD, AILQ…LAGI, LALP…GIVT, IILF…LSML, and IFIS…PNLV.

The protein belongs to the complex I subunit 4 family.

It localises to the plastid. It is found in the chloroplast thylakoid membrane. It carries out the reaction a plastoquinone + NADH + (n+1) H(+)(in) = a plastoquinol + NAD(+) + n H(+)(out). The enzyme catalyses a plastoquinone + NADPH + (n+1) H(+)(in) = a plastoquinol + NADP(+) + n H(+)(out). In Psilotum nudum (Whisk fern), this protein is NAD(P)H-quinone oxidoreductase chain 4, chloroplastic.